The primary structure comprises 61 residues: Large ribosomal subunit protein bL28 (61 aa).

Residues M1–R26 are disordered. The span at K9–R25 shows a compositional bias: polar residues.

It belongs to the bacterial ribosomal protein bL28 family.

In Limosilactobacillus reuteri (strain DSM 20016) (Lactobacillus reuteri), this protein is Large ribosomal subunit protein bL28.